The chain runs to 206 residues: Large ribosomal subunit protein uL4 (206 aa).

A disordered region spans residues 43-78 (ARSGNRKQKDREEVKHTTKKPWRQKGTGRARAGMSS). Over residues 49-58 (KQKDREEVKH) the composition is skewed to basic and acidic residues. Over residues 59–70 (TTKKPWRQKGTG) the composition is skewed to basic residues.

The protein belongs to the universal ribosomal protein uL4 family. Part of the 50S ribosomal subunit.

One of the primary rRNA binding proteins, this protein initially binds near the 5'-end of the 23S rRNA. It is important during the early stages of 50S assembly. It makes multiple contacts with different domains of the 23S rRNA in the assembled 50S subunit and ribosome. In terms of biological role, forms part of the polypeptide exit tunnel. The polypeptide is Large ribosomal subunit protein uL4 (Ralstonia pickettii (strain 12J)).